Consider the following 371-residue polypeptide: Queuine tRNA-ribosyltransferase (371 aa).

D90 (proton acceptor) is an active-site residue. Residues 90 to 94 (DSGGF), D144, Q188, and G215 contribute to the substrate site. The tract at residues 246-252 (GVGTPED) is RNA binding. The Nucleophile role is filled by D265. The tract at residues 270 to 274 (TRNAR) is RNA binding; important for wobble base 34 recognition. Residues C303, C305, C308, and H334 each contribute to the Zn(2+) site.

The protein belongs to the queuine tRNA-ribosyltransferase family. In terms of assembly, homodimer. Within each dimer, one monomer is responsible for RNA recognition and catalysis, while the other monomer binds to the replacement base PreQ1. Requires Zn(2+) as cofactor.

The enzyme catalyses 7-aminomethyl-7-carbaguanine + guanosine(34) in tRNA = 7-aminomethyl-7-carbaguanosine(34) in tRNA + guanine. The protein operates within tRNA modification; tRNA-queuosine biosynthesis. Functionally, catalyzes the base-exchange of a guanine (G) residue with the queuine precursor 7-aminomethyl-7-deazaguanine (PreQ1) at position 34 (anticodon wobble position) in tRNAs with GU(N) anticodons (tRNA-Asp, -Asn, -His and -Tyr). Catalysis occurs through a double-displacement mechanism. The nucleophile active site attacks the C1' of nucleotide 34 to detach the guanine base from the RNA, forming a covalent enzyme-RNA intermediate. The proton acceptor active site deprotonates the incoming PreQ1, allowing a nucleophilic attack on the C1' of the ribose to form the product. After dissociation, two additional enzymatic reactions on the tRNA convert PreQ1 to queuine (Q), resulting in the hypermodified nucleoside queuosine (7-(((4,5-cis-dihydroxy-2-cyclopenten-1-yl)amino)methyl)-7-deazaguanosine). This is Queuine tRNA-ribosyltransferase from Neisseria meningitidis serogroup A / serotype 4A (strain DSM 15465 / Z2491).